Consider the following 185-residue polypeptide: Large ribosomal subunit protein uL5 (185 aa).

The protein belongs to the universal ribosomal protein uL5 family. As to quaternary structure, part of the 50S ribosomal subunit; part of the 5S rRNA/L5/L18/L25 subcomplex. Contacts the 5S rRNA and the P site tRNA. Forms a bridge to the 30S subunit in the 70S ribosome.

In terms of biological role, this is one of the proteins that bind and probably mediate the attachment of the 5S RNA into the large ribosomal subunit, where it forms part of the central protuberance. In the 70S ribosome it contacts protein S13 of the 30S subunit (bridge B1b), connecting the 2 subunits; this bridge is implicated in subunit movement. Contacts the P site tRNA; the 5S rRNA and some of its associated proteins might help stabilize positioning of ribosome-bound tRNAs. This chain is Large ribosomal subunit protein uL5, found in Brucella abortus (strain S19).